The primary structure comprises 583 residues: MQFGELAKVLAAVESTTQRTTMVKLLTSLFKKAKPEEIDKIVYFILGDLRPPWEGVELGVAEKLCIRAISKATGLSAAELEGWYKKSGDVGEVARRALAAGKRPTLLAFAQQKPLEVAEVYDTLLKVAKAAGEGAQDLKVSLLSSLFSRASPEEAKYIARFVVGKLRLGVADMTLIEALSEAFGVSKEGLERAYHVYPDLGRLARHVAEGRPLEEIKITPGVPVLPMLAQRLSSASEILAKLGGTAICEYKYDGERAQIHLREGSVKIFSRRLEDITHAYPDVAKAVKEAVKAREAILEGEIVAVDPDTGEMLPFQELMHRKRKHDVAEAMEAYPAVLYLFDLLYVDGEDLTTQPLIYRRLRLSEVVEEGGDVYIAKWGMFDGAEDVDLFFHEAVSLGTEGLICKSPTSTYEMGARGWNWIKYKRDYRSEMIDTVDLVVVGAFHGRGKRAGLYGAFLLAAYDPSTDMFYTVCKVGSGFTDADLRRMYDMLQPLKIPHRHPRVVSKMQPDVWFVPQVVIEVIGAEITLSPLHTCCIGAVKPGVGLAIRFPRFTGRYRTDKRPEDATTTKELVEMYQRQKKVPTT.

An ATP-binding site is contributed by glutamate 249. Residue lysine 251 is the N6-AMP-lysine intermediate of the active site. ATP is bound by residues arginine 256, arginine 271, glutamate 301, phenylalanine 341, arginine 416, and lysine 422.

The protein belongs to the ATP-dependent DNA ligase family. The cofactor is Mg(2+).

The catalysed reaction is ATP + (deoxyribonucleotide)n-3'-hydroxyl + 5'-phospho-(deoxyribonucleotide)m = (deoxyribonucleotide)n+m + AMP + diphosphate.. Its function is as follows. DNA ligase that seals nicks in double-stranded DNA during DNA replication, DNA recombination and DNA repair. The polypeptide is DNA ligase (Pyrobaculum calidifontis (strain DSM 21063 / JCM 11548 / VA1)).